A 384-amino-acid chain; its full sequence is Autophagy-related protein 30 (384 aa).

The segment at 1 to 63 (MFSRKQVQKR…ASPGQLRPRT (63 aa)) is disordered. Over residues 13–27 (ELSSLHCSNSSNSLN) the composition is skewed to low complexity. A compositionally biased stretch (polar residues) spans 45–63 (RGNNRSDNVASPGQLRPRT). Ser-112 carries the post-translational modification Phosphoserine. The disordered stretch occupies residues 266–291 (VKHDKPSSPLPNYHNTLKQAPSSNSQ). Over residues 278–291 (YHNTLKQAPSSNSQ) the composition is skewed to polar residues.

In terms of assembly, interacts with ATG11, ATG17, ATG37, PEX3 and PEX14. Phosphorylation at Ser-112 is required for micro- and macropexophagy.

It localises to the vacuole lumen. The protein localises to the preautophagosomal structure. Its subcellular location is the peroxisome membrane. Its function is as follows. Acts as the peroxisome receptor for pexophagy. Required for both micropexophagy and macropexophagy, but not for the cytoplasm to vacuole transport (Cvt) or autophagy pathways. Required for functional micropexophagic apparatus (MIPA) and relocation of ATG11 to the peroxisome-sequestering arms of the vacuole. The chain is Autophagy-related protein 30 (ATG30) from Komagataella phaffii (strain GS115 / ATCC 20864) (Yeast).